The chain runs to 357 residues: S-adenosyl-L-methionine:benzoic acid/salicylic acid carboxyl methyltransferase 2 (357 aa).

Tyr18 contributes to the S-adenosyl-L-homocysteine binding site. Residue Gln25 coordinates benzoate. Positions 59, 64, 96, 97, 135, and 136 each coordinate S-adenosyl-L-homocysteine. Trp157 provides a ligand contact to benzoate. Mg(2+)-binding residues include Asn168, Asp254, Phe256, and Asn257. Benzoate is bound at residue Gln260.

Belongs to the methyltransferase superfamily. Type-7 methyltransferase family. As to expression, predominantly expressed in petal limbs and tubes of corollas.

It catalyses the reaction benzoate + S-adenosyl-L-methionine = methyl benzoate + S-adenosyl-L-homocysteine. It carries out the reaction salicylate + S-adenosyl-L-methionine = methyl salicylate + S-adenosyl-L-homocysteine. The protein operates within aromatic compound metabolism. In terms of biological role, converts benzoic acid into the volatile ester methyl benzoates. This scent, mostly produced in a rhythmical, diurnal manner, attracts the pollinators. This Petunia hybrida (Petunia) protein is S-adenosyl-L-methionine:benzoic acid/salicylic acid carboxyl methyltransferase 2.